We begin with the raw amino-acid sequence, 647 residues long: DNA ligase (647 aa).

NAD(+)-binding positions include 30 to 34 (DEEYD), 79 to 80 (SM), and glutamate 105. Residue lysine 107 is the N6-AMP-lysine intermediate of the active site. NAD(+) contacts are provided by arginine 128, glutamate 162, and lysine 301. Cysteine 395, cysteine 398, cysteine 411, and cysteine 416 together coordinate Zn(2+). The BRCT domain maps to 570 to 647 (KSDGVIFGKT…ESAFNELVKE (78 aa)).

This sequence belongs to the NAD-dependent DNA ligase family. LigA subfamily. Mg(2+) is required as a cofactor. It depends on Mn(2+) as a cofactor.

The enzyme catalyses NAD(+) + (deoxyribonucleotide)n-3'-hydroxyl + 5'-phospho-(deoxyribonucleotide)m = (deoxyribonucleotide)n+m + AMP + beta-nicotinamide D-nucleotide.. In terms of biological role, DNA ligase that catalyzes the formation of phosphodiester linkages between 5'-phosphoryl and 3'-hydroxyl groups in double-stranded DNA using NAD as a coenzyme and as the energy source for the reaction. It is essential for DNA replication and repair of damaged DNA. In Campylobacter jejuni subsp. jejuni serotype O:2 (strain ATCC 700819 / NCTC 11168), this protein is DNA ligase.